Here is a 488-residue protein sequence, read N- to C-terminus: MTFNHKTIEELHDLLVKKEISAVELTQATLADIKEREAAVDSFITVSEEEALAQAAALDAKGIDADNLMSGIPLAVKDNISTKGILTTAASKILYNYKPIFDATSVEKLYGKDMIIVGKTNMDEFAMGGSSENSYFKTTKNAWDSSKVPGGSSGGSATAVASGQVRLSLGSDTGGSIRQPASFNGVVGLKPTYGRVSRFGLIAFGSSLDQIGPFSQTVKENAQLLNVISGNDPKDSTSSQEEVPDFTSKIGQDIKGMKIALPKEYMGEGIDSKVKETILAAAKHLESLGAIVEEVSLPHSKYGVAVYYIIASSEASSNLQRFDGIRYGYRAEGIENLEDVYVKSRSEGFGEEVKRRIMLGTFSLSSGYYDAYFKKAGQVRTLIMQDFAKVFEKYDLILGPTAPTVAYDLGSQNQDPVAMYLADLLTIPVNLAGLPGISIPAGFVDGLPVGLQLIGNHFDEATIYQTAAAFEATTDYHKQQPVIFGGEK.

Active-site charge relay system residues include Lys-77 and Ser-152. The active-site Acyl-ester intermediate is Ser-176.

The protein belongs to the amidase family. GatA subfamily. As to quaternary structure, heterotrimer of A, B and C subunits.

The enzyme catalyses L-glutamyl-tRNA(Gln) + L-glutamine + ATP + H2O = L-glutaminyl-tRNA(Gln) + L-glutamate + ADP + phosphate + H(+). In terms of biological role, allows the formation of correctly charged Gln-tRNA(Gln) through the transamidation of misacylated Glu-tRNA(Gln) in organisms which lack glutaminyl-tRNA synthetase. The reaction takes place in the presence of glutamine and ATP through an activated gamma-phospho-Glu-tRNA(Gln). The chain is Glutamyl-tRNA(Gln) amidotransferase subunit A from Streptococcus sanguinis (strain SK36).